A 515-amino-acid chain; its full sequence is Protein disulfide-isomerase (515 aa).

The first 20 residues, 1–20, serve as a signal peptide directing secretion; sequence MRTFAPWILSLLGASAVASA. Thioredoxin domains are found at residues 21 to 136 and 343 to 470; these read ADAT…QSLP and VLDD…ENGK. Catalysis depends on nucleophile residues Cys58, Cys61, Cys393, and Cys396. Cystine bridges form between Cys58–Cys61 and Cys393–Cys396. 2 stretches are compositionally biased toward basic and acidic residues: residues 472–496 and 506–515; these read KVDA…RAAS and SDDKSEHDEL. Positions 472 to 515 are disordered; that stretch reads KVDALEVDPKKEQESGDATETRAASDETETPAATSDDKSEHDEL. Residues 512–515 carry the Prevents secretion from ER motif; the sequence is HDEL.

The protein belongs to the protein disulfide isomerase family.

It is found in the endoplasmic reticulum lumen. It carries out the reaction Catalyzes the rearrangement of -S-S- bonds in proteins.. Functionally, participates in the folding of proteins containing disulfide bonds, may be involved in glycosylation, prolyl hydroxylation and triglyceride transfer. The chain is Protein disulfide-isomerase (pdiA) from Aspergillus oryzae (strain ATCC 42149 / RIB 40) (Yellow koji mold).